Here is a 203-residue protein sequence, read N- to C-terminus: Superoxide dismutase [Mn] (203 aa).

Mn(2+) is bound by residues His-27, His-81, Asp-164, and His-168.

This sequence belongs to the iron/manganese superoxide dismutase family. As to quaternary structure, homodimer. Requires Mn(2+) as cofactor.

It carries out the reaction 2 superoxide + 2 H(+) = H2O2 + O2. Destroys superoxide anion radicals which are normally produced within the cells and which are toxic to biological systems. Partially complements double sodA-sodB deletions in E.coli. This Pseudomonas aeruginosa (strain ATCC 15692 / DSM 22644 / CIP 104116 / JCM 14847 / LMG 12228 / 1C / PRS 101 / PAO1) protein is Superoxide dismutase [Mn].